Here is a 514-residue protein sequence, read N- to C-terminus: Cytochrome P450 monooxygenase verB (514 aa).

The helical transmembrane segment at 5 to 25 threads the bilayer; sequence WLSASVLITAVILLVDYLNYY. Cys457 contributes to the heme binding site.

Belongs to the cytochrome P450 family. Requires heme as cofactor.

It localises to the membrane. It functions in the pathway mycotoxin biosynthesis. Functionally, cytochrome P450 monooxygenase; part of the gene cluster that mediates the biosynthesis of 11'-deoxyverticillin A, one of the dimeric epipolythiodioxopiperazines (ETPs) from the verticillin family that act as mycotoxins. 11'-deoxyverticillin A is required for normal conidiation. The nonribosomal peptide synthetase verP is speculated to be responsible for condensation of amino acids to form the carbon skeleton of verticillin, whereas the cluster-specific tailoring enzymes are involved in further modifications leading to the production of 11'-deoxyverticillin A. The sequence is that of Cytochrome P450 monooxygenase verB from Clonostachys rogersoniana.